The sequence spans 255 residues: Aliphatic sulfonates import ATP-binding protein SsuB (255 aa).

Positions 12 to 233 (LLLNAVSKHY…RLGSVRLAEL (222 aa)) constitute an ABC transporter domain. 44–51 (GRSGGGKS) provides a ligand contact to ATP.

The protein belongs to the ABC transporter superfamily. Aliphatic sulfonates importer (TC 3.A.1.17.2) family. As to quaternary structure, the complex is composed of two ATP-binding proteins (SsuB), two transmembrane proteins (SsuC) and a solute-binding protein (SsuA).

It is found in the cell inner membrane. It carries out the reaction ATP + H2O + aliphatic sulfonate-[sulfonate-binding protein]Side 1 = ADP + phosphate + aliphatic sulfonateSide 2 + [sulfonate-binding protein]Side 1.. Part of the ABC transporter complex SsuABC involved in aliphatic sulfonates import. Responsible for energy coupling to the transport system. The chain is Aliphatic sulfonates import ATP-binding protein SsuB from Escherichia coli O1:K1 / APEC.